Here is a 1186-residue protein sequence, read N- to C-terminus: Myelin transcription factor 1-like protein (1186 aa).

The segment at 1–21 (MEVDTEEKRHRTRSKGVRVPV) is disordered. The CCHHC-type 1 zinc-finger motif lies at 22 to 65 (EPAIQELFSCPTPGCDGSGHVSGKYARHRSVYGCPLAKKRKTQD). 4 residues coordinate Zn(2+): Cys-31, Cys-36, His-49, and Cys-55. Disordered stretches follow at residues 56 to 175 (PLAK…QMNC) and 220 to 247 (RTES…GRKS). A compositionally biased stretch (acidic residues) spans 86–169 (SVDECDDSDG…EEEEEEEENE (84 aa)). Ser-250 carries the post-translational modification Phosphoserine. Disordered regions lie at residues 342–372 (SETN…GRTP) and 449–513 (REKM…GCDG). Positions 343-357 (ETNPQERNPQQNMNI) are enriched in polar residues. 3 stretches are compositionally biased toward basic and acidic residues: residues 361–372 (VRPEEDFPGRTP), 449–487 (REKM…DSHV), and 495–505 (DPSRTEKKESK). 2 CCHHC-type zinc fingers span residues 497–540 (SRTE…PPEI) and 541–584 (LAMH…KLAK). Zn(2+) is bound by residues Cys-506, Cys-511, His-524, Cys-530, Cys-550, Cys-555, His-568, and Cys-574. Disordered stretches follow at residues 659–709 (RAIA…GGGS) and 753–780 (KPQD…MNKQ). Positions 666–683 (QTRDISPKGYDDAKRYCK) are enriched in basic and acidic residues. The span at 685–709 (PSPSSSSTSSYAPSSSSNLSCGGGS) shows a compositional bias: low complexity. 3 CCHHC-type zinc fingers span residues 896–939 (LATS…GIRI), 945–988 (DKED…QKDG), and 998–1041 (KSVK…MKKA). Cys-905, Cys-910, His-923, Cys-929, Cys-954, Cys-959, His-972, Cys-978, Cys-1007, Cys-1012, His-1025, and Cys-1031 together coordinate Zn(2+). The stretch at 1056 to 1130 (SNGIENDEEI…LANLSQSLIH (75 aa)) forms a coiled coil.

It belongs to the MYT1 family. In terms of assembly, interacts with SIN3B.

The protein resides in the nucleus. Its subcellular location is the chromosome. Transcription factor that plays a key role in neuronal differentiation by specifically repressing expression of non-neuronal genes during neuron differentiation. In contrast to other transcription repressors that inhibit specific lineages, mediates repression of multiple differentiation programs. Also represses expression of negative regulators of neurogenesis, such as members of the Notch signaling pathway, including HES1. The combination of three transcription factors, ASCL1, POU3F2/BRN2 and MYT1L, is sufficient to reprogram fibroblasts and other somatic cells into induced neuronal (iN) cells in vitro. Directly binds the 5'-AAGTT-3' core motif present on the promoter of target genes and represses transcription by recruiting a multiprotein complex containing SIN3B. The 5'-AAGTT-3' core motif is absent from the promoter of neural genes. The protein is Myelin transcription factor 1-like protein of Homo sapiens (Human).